A 170-amino-acid polypeptide reads, in one-letter code: Adenine phosphoribosyltransferase (170 aa).

It belongs to the purine/pyrimidine phosphoribosyltransferase family. In terms of assembly, homodimer.

It localises to the cytoplasm. It carries out the reaction AMP + diphosphate = 5-phospho-alpha-D-ribose 1-diphosphate + adenine. It participates in purine metabolism; AMP biosynthesis via salvage pathway; AMP from adenine: step 1/1. In terms of biological role, catalyzes a salvage reaction resulting in the formation of AMP, that is energically less costly than de novo synthesis. In Mycoplasmopsis pulmonis (strain UAB CTIP) (Mycoplasma pulmonis), this protein is Adenine phosphoribosyltransferase.